Reading from the N-terminus, the 479-residue chain is Poly(A) polymerase catalytic subunit (479 aa).

Residues Asp-202 and Asp-204 contribute to the active site. Residues Asp-202, Asp-204, and Asp-253 each coordinate Ca(2+).

Belongs to the poxviridae poly(A) polymerase catalytic subunit family. In terms of assembly, heterodimer of a large (catalytic) subunit and a small (regulatory) subunit.

The enzyme catalyses RNA(n) + ATP = RNA(n)-3'-adenine ribonucleotide + diphosphate. Its function is as follows. Polymerase that creates the 3'-poly(A) tail of mRNA's. The polypeptide is Poly(A) polymerase catalytic subunit (OPG063) (Camelus).